The following is a 479-amino-acid chain: Inhibitory synaptic factor 2A (479 aa).

Phosphoserine is present on Ser-177. Disordered stretches follow at residues 226-247 and 315-338; these read GRAK…ALRR and SPEC…PSPT. A compositionally biased stretch (basic and acidic residues) spans 228-237; the sequence is AKQDRGRPNS. Positions 318 to 337 are enriched in polar residues; that stretch reads CSEQPSQTHTPPGLGNQPSP. The stretch at 353-379 forms a coiled coil; sequence TEVVDLKAQLQMMENLISSSQETIKVL. Positions 449 to 461 are enriched in polar residues; sequence SPYSQETYSSTPK. The disordered stretch occupies residues 449 to 472; that stretch reads SPYSQETYSSTPKQKSKTESKKHG.

Belongs to the INSYN2 family. As to quaternary structure, interacts with GPHN.

It is found in the postsynaptic density. In terms of biological role, component of the protein machinery at the inhibitory synapses, probably acting as a scaffold. Inhibitory synapses dampen neuronal activity through postsynaptic hyperpolarization. This synaptic inhibition is fundamental for the functioning of the central nervous system, shaping and orchestrating the flow of information through neuronal networks to generate a precise neural code. The chain is Inhibitory synaptic factor 2A from Homo sapiens (Human).